The following is a 589-amino-acid chain: Serine/threonine-protein phosphatase 2A 65 kDa regulatory subunit A alpha isoform (589 aa).

Ala2 is subject to N-acetylalanine. HEAT repeat units follow at residues 8-46 (DSLY…GVER), 47-84 (TRSE…GGPE), 85-123 (YVHC…SPSD), 124-161 (LEAH…VSSA), 162-200 (VKAE…ELDN), 201-239 (VKSE…PQED), 240-278 (LEAL…GPEI), 279-321 (TKTD…RENV), 322-360 (IMSQ…GKDN), 361-399 (TIEH…GIRQ), 400-438 (LSQS…GVEF), 439-477 (FDEK…GKEW), 478-516 (AHAT…GQDI), 517-555 (TTKH…DNST), and 556-589 (LQSE…LSLA). A PP2A subunit B binding region spans residues 8–399 (DSLYPIAVLI…CVNEVIGIRQ (392 aa)). The tract at residues 47-321 (TRSELLPFLT…NLSADCRENV (275 aa)) is polyoma small and medium T antigens Binding. An SV40 small T antigen binding region spans residues 85–239 (YVHCLLPPLE…NIAQLLPQED (155 aa)). Residue Lys280 is modified to N6-acetyllysine. Residues 400 to 589 (LSQSLLPAIV…QEALTVLSLA (190 aa)) form a PP2A subunit C binding region.

The protein belongs to the phosphatase 2A regulatory subunit A family. As to quaternary structure, PP2A consists of a common heterodimeric core enzyme, composed of PPP2CA a 36 kDa catalytic subunit (subunit C) and PPP2R1A a 65 kDa constant regulatory subunit (PR65 or subunit A), that associates with a variety of regulatory subunits. Proteins that associate with the core dimer include three families of regulatory subunits B (the R2/B/PR55/B55, R3/B''/PR72/PR130/PR59 and R5/B'/B56 families), the 48 kDa variable regulatory subunit, viral proteins, and cell signaling molecules. Found in a complex with at least ARL2, PPP2CB, PPP2R1A, PPP2R2A, PPP2R5E and TBCD. Interacts with the PP2A C catalytic subunit PPP2CA. Interacts with the PP2A B subunit PPP2R2A. Interacts with the PP2A B subunit PPP2R5D. Interacts with FOXO1; the interaction dephosphorylates FOXO1 on AKT-mediated phosphorylation sites. Interacts with IPO9. Interacts with TP53 and SGO1. Interacts with PLA2G16; this interaction might decrease PP2A activity. Interacts with CTTNBP2NL. Interacts with GNA12; the interaction promotes protein phosphatase 2A activation causing dephosphorylation of MAPT. Interacts with CIP2A; this interaction stabilizes CIP2A. Interacts with PABIR1/FAM122A. Interacts with ADCY8; antagonizes interaction between ADCY8 and calmodulin. Interacts with CRTC3 (when phosphorylated at 'Ser-391'). Interacts with SPRY2. Part of the core of STRIPAK complexes composed of PP2A catalytic and scaffolding subunits, the striatins (PP2A regulatory subunits), the striatin-associated proteins MOB4, STRIP1 and STRIP2, PDCD10 and members of the STE20 kinases, such as STK24 and STK26. Component of the Integrator-PP2A (INTAC) complex, composed of the Integrator core complex and protein phosphatase 2A subunits PPP2CA and PPP2R1A. (Microbial infection) Interacts with JC virus small t antigen; this interaction inhibits PPP2R1A activity.

It localises to the cytoplasm. Its subcellular location is the nucleus. It is found in the chromosome. The protein localises to the centromere. The protein resides in the lateral cell membrane. It localises to the cell projection. Its subcellular location is the dendrite. In terms of biological role, the PR65 subunit of protein phosphatase 2A serves as a scaffolding molecule to coordinate the assembly of the catalytic subunit and a variable regulatory B subunit. Upon interaction with GNA12 promotes dephosphorylation of microtubule associated protein TAU/MAPT. Required for proper chromosome segregation and for centromeric localization of SGO1 in mitosis. Together with RACK1 adapter, mediates dephosphorylation of AKT1 at 'Ser-473', preventing AKT1 activation and AKT-mTOR signaling pathway. Dephosphorylation of AKT1 is essential for regulatory T-cells (Treg) homeostasis and stability. Part of the striatin-interacting phosphatase and kinase (STRIPAK) complexes. STRIPAK complexes have critical roles in protein (de)phosphorylation and are regulators of multiple signaling pathways including Hippo, MAPK, nuclear receptor and cytoskeleton remodeling. Different types of STRIPAK complexes are involved in a variety of biological processes such as cell growth, differentiation, apoptosis, metabolism and immune regulation. Key mediator of a quality checkpoint during transcription elongation as part of the Integrator-PP2A (INTAC) complex. The INTAC complex drives premature transcription termination of transcripts that are unfavorably configured for transcriptional elongation: within the INTAC complex, acts as a scaffolding subunit for PPP2CA, which catalyzes dephosphorylation of the C-terminal domain (CTD) of Pol II subunit POLR2A/RPB1 and SUPT5H/SPT5, thereby preventing transcriptional elongation. Regulates the recruitment of the SKA complex to kinetochores. This chain is Serine/threonine-protein phosphatase 2A 65 kDa regulatory subunit A alpha isoform, found in Homo sapiens (Human).